Reading from the N-terminus, the 142-residue chain is Salivary protein 15b (142 aa).

The first 20 residues, 1–20 (MKYLGLALISAVFLIGTCQA), serve as a signal peptide directing secretion. Intrachain disulfides connect C27-C44, C40-C108, and C91-C117.

This sequence belongs to the PBP/GOBP family. Female salivary gland.

It is found in the secreted. Functionally, inhibits contact coagulation pathway activation in the host by sequestering anionic polymers, such as dextran sulfate and heparin, and thus blocking interaction of protein components of the pathway with negatively charged surfaces. Inhibits dextran sulfate-mediated autoactivation of host coagulation factor XII (F12). Inhibits dextran sulfate-mediated activation of host factor XI (F11) by activated F12. Inhibits polyphosphate-induced plasma extravasation at the injection site in mouse model, probably via inhibition of bradykinin generation in host skin. The polypeptide is Salivary protein 15b (Phlebotomus duboscqi (Sandfly)).